Reading from the N-terminus, the 499-residue chain is Proline dehydrogenase 1, mitochondrial (499 aa).

Residues 1-72 constitute a mitochondrion transit peptide; sequence MATRLLRTNF…LDLSDQARLF (72 aa).

This sequence belongs to the proline oxidase family. The cofactor is FAD. As to expression, ubiquitous. Highest expression in pollen grains, in the stigma and in developing embryos.

It localises to the mitochondrion. The catalysed reaction is L-proline + a quinone = (S)-1-pyrroline-5-carboxylate + a quinol + H(+). It participates in amino-acid degradation; L-proline degradation into L-glutamate; L-glutamate from L-proline: step 1/2. Converts proline to delta-1-pyrroline-5-carboxylate. The polypeptide is Proline dehydrogenase 1, mitochondrial (POX1) (Arabidopsis thaliana (Mouse-ear cress)).